The primary structure comprises 3305 residues: MGKSNRLLSVLFVISVLWKAAYGNGKCQIACKGSSSPSFAAGQKYNYGVEGTVSVYLTGADNQETSLKMLGQASVSAISNCELELSVHNMVLSGPDGKKYPCPQGIEKPVRFSYQDGRVGPEICAAEDDSRRSLNIKRAIISLLQAEQKPSVQVDVFGVCPTEVSSSQEGGAVLLHRSRDLSRCAHREQGRNDFVNSIANPDAGIKDLQVLQSMLNVESKVNNGVPEKVSAIEEYLYKPFSVGENGARAKVHTKLTLSGKGGAGGGNAHCTESRSIIFDVPHGTSSASGNLNSVISAVKETARTVANDASSKSAGQFAQLVRIMRTSSKDDLMRIYSQVKAHQLEKRVYLDALLRAGTGESIEASIQILKSKDLSQLEQHLVFLSLGNARHVNNPALKAAAGLLDMPNLPKEVYLGAGALGGAYCREHDCHNVKPEGIVALSNKLGSKLQNCRPKNKPDEDVVVAILKGIRNIRHLEDSLIDKLVHCAVDNNVKARVRAVALEAFHADPCSAKIHKTAMDIMKNRQLDSEIRIKAYLAVIECPCSHSASEIKNLLDSEPVHQVGNFITSSLRHIRSSSNPDKQLAKKHYGQIRTPNKFKVDERKYSFYREMSYKLDALGAGGSVDQTVIYSQTSFLPRSVNFNLTVDLFGQSYNVMELGGRQGNLDRVVEHFLGPKSFLRTEDPQALYDNLVKRFQESKKKVEDSLSRGRRSIKSEIDVFDKNLKAESAPYNNELDLDIYVKLFGTDAVFLSFGDDKGFDFNKMLDQILGGCNSGINKAKHFQQEIRSHLLFMDAELAYPTSVGLPLRLNLIGAATARLDVATNIDIRQIFQSPQNAKADIKFVPSTDFEISGAFIIDADAFSTGIKVITNLHSSTGVHVNAKVLENGRGIDLQIGLPVDKQELIAASSDLVFVTAEKGQKEKQKVIKMEKGENEYSACFDQLSGPLGLTMCYDMVLPFPIVNRNDKLDSIAKAMGKWPLSGSAKFKLFLEKNDLRGYHIKAVVKEDKDAGRRSFELLLDTEGAKTRRSQLTGEAVYNENEVGVKLGLEAVGKVIYGHIWAHKKPNELVASVKGKLDDIEYSGKLGFSVQGNEHRAVYKPIFEYSLPDGSSPGSKKYEVKIDGQVIRECDGRVTKYTFDGVHVNLQNAEKPLEICGSVSTVAQPREVEFDVEVKHYASLKGSWKGSDVVLAFNNQLNPKINFDLKGKFENTDSMHNELDIHYGPNRGDNNARITFSQILKYHVENSKNFNVITKNNLEIRAVPFKLVANADVDPKKIDIDIEGQLQDKSAGFNLDARTHIKKEGDYSIKVKANLNNANLEAFSRRDIVNAEKSNVENYIDMKGVGRYELSGFVLHKTKPNDVNVGFIGHLKINGGGKNEDFKINIGHIETPAVFSSHATISGSRGDIIDYLLKIMRTANPNGNFKLVIKDSIAANGQYKVTDADGKGNGLIIIDFKKINRKIKGDVRFTAKEPVFNADIDLFLNFEKDNSDKVHFSTYNKKTDKVMDTKNKLEYAGKRTEVNIHQDGILAVTGKAHTVAELVLPTERCLSLKIDHDGAFKDGLYNGHMDMTISDAPKRGSGASTISYKGKVSNSNLDQEIIDYEGQINFKLKDGKNLQSTFSLKNNPDGDKFKYEFKSDVNGNLIPKPANLVATGTYSNSENEIDETYRLKGSYGSDIGFELAGVGTIKFLDAGDKKYLDDYTLTVRLPFEKAHDIKWVSTVLFLQPQGQEMTEYTLVESVQINADVYKIDANGKVGPKNGYGAVKVLVPHVEPFVLDYNYKSSHEGEKNNNYVELKTKYGKGKSASMVVDSSYAPHYSTLKVKANTPNNDKFKKLDVTVHSKNPSPDAYSNSVVVDADGRVYKIDSSIVLSKAHPVLDIQYHSPSSDKIRRLYLQGSSLSSTQGKLEVKVDNINDICLDAVSEANVQKDNVAFKVVANAKELGWKNYGIDISSKDSGSGKRLEFHATNDNKNVLSGSTSFISKQEGQKTIIEGSGSVKVKEEQKSANFKYIRTVFTDSNEKGVETFFNVALGERSYVAESRVTNYEYKNSYVYCEEKKQCAHAEIQSKIDMSTPGMIVNVINAGLDLRKLGVAPELGLQMRDEVSDRRPPRFTLDLHINKEDRKYHLHAYNTPENGHYASGVTVRLPSRVMALEYTLTHPTSQDLPFPIKGEACLDLDKNRPGHKTSARFLVDYSNSGSEDKAVAEIGFFHPKIEKEAVIRLNAFMKRPENGCFKIESSASLCHSALGTDRVAKVMFETTPNSVKFLADTPFVKAIDVEGSFNVNQQQRTQQCLFRICLLEGKPVQMSALVKDYQYYEFTTEESNRKLSYVGHLIPEKRVDISTDIILSGDKKNIAHGALFLQDNLVKSDYGLSKENFNYFLNALKKDLDTLEDRIKNVGEKASKDVEAVTQRAAPYFKKVEDNFRAEWNRFYQEIADDKVFKEISHVFNEIVQYIAKFIDEILQGTKRSWTPSCRPTLSHPRNREMYKKQIEPQVKQLYDTLGALMKEYLDGVIDVVAHFAAIVTDFFEKHKAELQELTNVFTEIFKDLTRLVVAQLKELPPKIAQIYNDIVSQITNMPFVVVLQEKWKEFNFAERAVQLVSQAYEAFSKILPTDELKEFAKALNAYLLKKIKEEKMEESKELPRAVREAGQRVLLITSIPALAVRRPRLRRWTWHHLKLAVGAGASAPSLGAASWSALRQLAAGDGPPALAPRGLPTAQLDPLDEVPNKLRAVVVNGQHIFTFDGRHLTFPGTCRYVLIHDHVDRNFTVLMQLANGQPKALVLEDKSGTIIELKDNGQVILNCQSHGFPVVEQDVFAFRQTSGRIGLCSKYGLMAFCTSKFEVCYFEVNGFYLGKLPGLLGDGNNEPYDDFRMPNGKICSSESEFGNSYRLSRSCPAANAPAHDHHQMHAPLPKPCERVFSGTSPLRPLSLMLDIAPFRQACIHAVTGADADKDLQQACDLARGYRRSRSRGCCPPRCPTPACAARTATGPGSWATPTSTNCPTDSLISSSPLRPLRTTPAHYKNMVVPLVSQLVDMLKGKHCTDIKVFLVGHTSKHPYPILYDTDLKLKNAKVSFDDKSRYDRIPFVKTGHEKFDSYSKTVVDFLNYIKIELGITNIEASQGQIFDLPLRPGAVKHVIFVTGGPTISQFFLLETVRALRNKVIIDEMAMSASLVTSTPGLKIGGGKNAAQIVGYEKHGVLLLGEKKQSKDSEAVRATLEVEDDPFSDAVEFANGVVFSASNYAALPAGQQKQFIQTAAHNIIQRMWREQIVQQCTCVFVDPFRVRSVCFNKARTEVARRRK.

The signal sequence occupies residues 1 to 23 (MGKSNRLLSVLFVISVLWKAAYG). The Vitellogenin domain maps to 39–640 (FAAGQKYNYG…SQTSFLPRSV (602 aa)). 2 N-linked (GlcNAc...) asparagine glycosylation sites follow: Asn643 and Asn2769. Residues 2733 to 2899 (LRAVVVNGQH…NSYRLSRSCP (167 aa)) form the VWFD domain. Cys2757 and Cys2898 are disulfide-bonded.

Cleaved into 2 chains by furin protease. However, prevention of cleavage does not impair its function. In terms of processing, N-glycosylated.

It localises to the secreted. Functionally, constitutes the major component of lipophorin, which mediates transport for various types of lipids in hemolymph. Acts by forming lipoprotein particles that bind lipoproteins and lipids. May be required for morphogens wingless (wg) and hedgehog (hh) function, possibly by acting as vehicles for the movement of wg and hh. This Manduca sexta (Tobacco hawkmoth) protein is Apolipophorins.